The sequence spans 464 residues: Cerebellar degeneration-related protein 2-like (464 aa).

Coiled-coil stretches lie at residues 31-154 (AAEL…RRKT), 201-264 (VSSL…KSRV), and 342-379 (MSILREVDEQYHALLEKYEELLGKCRRHEESLRHAEVQ). Positions 371 to 419 (ESLRHAEVQTSRPVSRDPSMKECRVAEPQQPPPTPPQTPSTPEALEGIS) are disordered. The span at 384–395 (VSRDPSMKECRV) shows a compositional bias: basic and acidic residues. Positions 399–409 (QQPPPTPPQTP) are enriched in pro residues.

Belongs to the CDR2 family.

This is Cerebellar degeneration-related protein 2-like (cdr2l) from Danio rerio (Zebrafish).